The primary structure comprises 785 residues: Cadherin-7 (785 aa).

The N-terminal stretch at 1–27 (MKLGKVEFCHFLQLIALFLCFSGMSQA) is a signal peptide. Residues 28–47 (ELSRSRSKPYFQSGRSRTKR) constitute a propeptide that is removed on maturation. The Extracellular portion of the chain corresponds to 28-607 (ELSRSRSKPY…AYVLPAGLST (580 aa)). 5 consecutive Cadherin domains span residues 49-153 (WVWN…EPKF), 154-262 (LDGP…PPRF), 263-377 (PRRS…PPVF), 378-482 (SSPL…APEF), and 482-599 (FAMD…AEAY). Residues N449 and N530 are each glycosylated (N-linked (GlcNAc...) asparagine). A helical transmembrane segment spans residues 608–628 (GALIAILACVLTLLVLILLIV). The Cytoplasmic segment spans residues 629–785 (TMRRRKKEPL…YGTGQESLYS (157 aa)).

The protein localises to the cell membrane. Its function is as follows. Cadherins are calcium-dependent cell adhesion proteins. They preferentially interact with themselves in a homophilic manner in connecting cells; cadherins may thus contribute to the sorting of heterogeneous cell types. This chain is Cadherin-7 (CDH7), found in Homo sapiens (Human).